A 321-amino-acid polypeptide reads, in one-letter code: Putative ribose-phosphate pyrophosphokinase 2 (321 aa).

Residues 41–43 (DGE) and 100–101 (RQ) each bind ATP. H134 provides a ligand contact to Mg(2+). Residues D223 and 227 to 231 (NTGVT) contribute to the D-ribose 5-phosphate site.

It belongs to the ribose-phosphate pyrophosphokinase family. Class I subfamily. In terms of assembly, homohexamer. It depends on Mg(2+) as a cofactor.

Its subcellular location is the cytoplasm. The enzyme catalyses D-ribose 5-phosphate + ATP = 5-phospho-alpha-D-ribose 1-diphosphate + AMP + H(+). The protein operates within metabolic intermediate biosynthesis; 5-phospho-alpha-D-ribose 1-diphosphate biosynthesis; 5-phospho-alpha-D-ribose 1-diphosphate from D-ribose 5-phosphate (route I): step 1/1. In terms of biological role, involved in the biosynthesis of the central metabolite phospho-alpha-D-ribosyl-1-pyrophosphate (PRPP) via the transfer of pyrophosphoryl group from ATP to 1-hydroxyl of ribose-5-phosphate (Rib-5-P). This chain is Putative ribose-phosphate pyrophosphokinase 2, found in Lactococcus lactis subsp. lactis (strain IL1403) (Streptococcus lactis).